A 637-amino-acid polypeptide reads, in one-letter code: Probable potassium transport system protein Kup (637 aa).

12 helical membrane passes run 24 to 44 (LAIA…LYAL), 64 to 84 (VISL…LLFV), 113 to 133 (AGAL…DAVI), 151 to 171 (PHLS…LFWI), 182 to 202 (LFGP…VYHI), 225 to 245 (LLQA…AEAL), 261 to 281 (AYGL…ALLI), 290 to 310 (PFFL…STVA), 351 to 371 (IYVP…VIGF), 381 to 401 (YGIA…VVMV), 409 to 429 (LLVG…FGAN), and 433 to 453 (VAQG…LLMT).

Belongs to the HAK/KUP transporter (TC 2.A.72) family.

The protein localises to the cell inner membrane. The catalysed reaction is K(+)(in) + H(+)(in) = K(+)(out) + H(+)(out). Functionally, transport of potassium into the cell. Likely operates as a K(+):H(+) symporter. The sequence is that of Probable potassium transport system protein Kup from Burkholderia ambifaria (strain MC40-6).